A 115-amino-acid polypeptide reads, in one-letter code: Double-headed protease inhibitor, submandibular gland (115 aa).

Kazal-like domains follow at residues 6 to 66 (IGRE…ACDI) and 67 to 115 (ECTE…HGEC). Disulfide bonds link C12-C46, C24-C43, C32-C64, C68-C97, C75-C94, and C83-C115.

It is found in the secreted. Functionally, this inhibitor is composed of two homologous actively inhibiting halves: one which inhibits trypsin, the other which inhibits elastase. The chain is Double-headed protease inhibitor, submandibular gland from Vulpes vulpes (Red fox).